The primary structure comprises 208 residues: Uracil phosphoribosyltransferase (208 aa).

5-phospho-alpha-D-ribose 1-diphosphate is bound by residues arginine 78, arginine 103, and 130 to 138; that span reads DPMLATGGS. Uracil-binding positions include isoleucine 193 and 198–200; that span reads GDA. A 5-phospho-alpha-D-ribose 1-diphosphate-binding site is contributed by aspartate 199.

It belongs to the UPRTase family. Requires Mg(2+) as cofactor.

It catalyses the reaction UMP + diphosphate = 5-phospho-alpha-D-ribose 1-diphosphate + uracil. It participates in pyrimidine metabolism; UMP biosynthesis via salvage pathway; UMP from uracil: step 1/1. Its activity is regulated as follows. Allosterically activated by GTP. In terms of biological role, catalyzes the conversion of uracil and 5-phospho-alpha-D-ribose 1-diphosphate (PRPP) to UMP and diphosphate. The chain is Uracil phosphoribosyltransferase from Glaesserella parasuis serovar 5 (strain SH0165) (Haemophilus parasuis).